The chain runs to 612 residues: UvrABC system protein C (612 aa).

One can recognise a GIY-YIG domain in the interval 20-98; it reads THSGVYRMLD…IKQHRPKYNI (79 aa). Positions 208-243 constitute a UVR domain; sequence SSVLEEISAKMYQASEDMEYEKAQVYRDQLVVLRKL.

It belongs to the UvrC family. In terms of assembly, interacts with UvrB in an incision complex.

Its subcellular location is the cytoplasm. The UvrABC repair system catalyzes the recognition and processing of DNA lesions. UvrC both incises the 5' and 3' sides of the lesion. The N-terminal half is responsible for the 3' incision and the C-terminal half is responsible for the 5' incision. The chain is UvrABC system protein C from Francisella tularensis subsp. mediasiatica (strain FSC147).